Here is a 342-residue protein sequence, read N- to C-terminus: Serpentine receptor class delta-33 (342 aa).

Transmembrane regions (helical) follow at residues 26–46, 62–82, 112–132, 148–168, 205–225, 261–281, and 287–307; these read IFVI…LLLL, IFLA…VTSM, YVGI…SMIY, IILC…CSNI, LIIL…VMYW, IIPL…QLGF, and YSYF…VVTI.

The protein belongs to the nematode receptor-like protein srd family.

The protein resides in the membrane. The sequence is that of Serpentine receptor class delta-33 (srd-33) from Caenorhabditis elegans.